Reading from the N-terminus, the 366-residue chain is Ferredoxin--NADP reductase (366 aa).

Positions 51, 59, 64, 104, 139, 308, and 349 each coordinate FAD.

Belongs to the ferredoxin--NADP reductase type 2 family. In terms of assembly, homodimer. FAD serves as cofactor.

It carries out the reaction 2 reduced [2Fe-2S]-[ferredoxin] + NADP(+) + H(+) = 2 oxidized [2Fe-2S]-[ferredoxin] + NADPH. The protein is Ferredoxin--NADP reductase of Methylibium petroleiphilum (strain ATCC BAA-1232 / LMG 22953 / PM1).